The following is a 186-amino-acid chain: Lipid A acyltransferase PagP (186 aa).

The first 25 residues, 1-25 (MNVSKYVAIFSFVFIQLISVGKVFA), serve as a signal peptide directing secretion. Active-site residues include H58, D101, and S102.

Belongs to the lipid A palmitoyltransferase family. As to quaternary structure, homodimer.

The protein localises to the cell outer membrane. It carries out the reaction a lipid A + a 1,2-diacyl-sn-glycero-3-phosphocholine = a hepta-acyl lipid A + a 2-acyl-sn-glycero-3-phosphocholine. The enzyme catalyses a lipid IVA + a 1,2-diacyl-sn-glycero-3-phosphocholine = a lipid IVB + a 2-acyl-sn-glycero-3-phosphocholine. It catalyses the reaction a lipid IIA + a 1,2-diacyl-sn-glycero-3-phosphocholine = a lipid IIB + a 2-acyl-sn-glycero-3-phosphocholine. Transfers a fatty acid residue from the sn-1 position of a phospholipid to the N-linked hydroxyfatty acid chain on the proximal unit of lipid A or its precursors. The sequence is that of Lipid A acyltransferase PagP from Shigella boydii serotype 4 (strain Sb227).